Here is a 591-residue protein sequence, read N- to C-terminus: Frizzled-9 (591 aa).

An N-terminal signal peptide occupies residues 1 to 22 (MAVAPLRGALLLWQLLAAGGAA). The Extracellular segment spans residues 23-229 (LEIGRFDPER…EVFWSRRDKD (207 aa)). Residues 34-155 (RGAAPCQAVE…NDPHALCMEA (122 aa)) enclose the FZ domain. Intrachain disulfides connect cysteine 39-cysteine 100, cysteine 47-cysteine 93, cysteine 84-cysteine 122, cysteine 111-cysteine 152, and cysteine 115-cysteine 139. The N-linked (GlcNAc...) asparagine glycan is linked to asparagine 53. Residues 58 to 172 (PNLLGHTSQG…PAEPHKGLGM (115 aa)) form a required for Wnt-activated receptor activity region. N-linked (GlcNAc...) asparagine glycosylation occurs at asparagine 158. A helical membrane pass occupies residues 230 to 250 (FALVWMAVWSALCFFSTAFTV). Over 251–266 (LTFLLEPHRFQYPERP) the chain is Cytoplasmic. The helical transmembrane segment at 267 to 287 (IIFLSMCYNVYSLAFLIRAVA) threads the bilayer. The Extracellular portion of the chain corresponds to 288-315 (GAQSVACDQEAGALYVIQEGLENTGCTL). The chain crosses the membrane as a helical span at residues 316 to 336 (VFLLLYYFGMASSLWWVVLTL). The Cytoplasmic portion of the chain corresponds to 337-355 (TWFLAAGKKWGHEAIEAHG). The chain crosses the membrane as a helical span at residues 356 to 376 (SYFHMAAWGLPALKTIVILTL). The Extracellular segment spans residues 377–400 (RKVAGDELTGLCYVASTDAAALTG). Residues 401 to 421 (FVLVPLSGYLVLGSSFLLTGF) form a helical membrane-spanning segment. Residues 422–447 (VALFHIRKIMKTGGTNTEKLEKLMVK) lie on the Cytoplasmic side of the membrane. A helical membrane pass occupies residues 448 to 468 (IGVFSILYTVPATCVIVCYVY). Residues 469–508 (ERLNMDFWRLRATEQPCAAAAGPGGRRDCSLPGGSVPTVA) are Extracellular-facing. A helical transmembrane segment spans residues 509–529 (VFMLKIFMSLVVGITSGVWVW). Residues 530–591 (SSKTFQTWQS…DPSLENPTHL (62 aa)) are Cytoplasmic-facing. Positions 532–537 (KTFQTW) match the Lys-Thr-X-X-X-Trp motif, mediates interaction with the PDZ domain of Dvl family members motif. Residues 554-591 (ACRAPGSYGRGTHCHYKAPTVVLHMTKTDPSLENPTHL) are required for CTNNB1 accumulation and TCF transcription factor activity.

It belongs to the G-protein coupled receptor Fz/Smo family. Ubiquitinated by ZNRF3, leading to its degradation by the proteasome. Expressed predominantly in adult and fetal brain, testis, eye, skeletal muscle and kidney. Moderately expressed in pancreas, thyroid, adrenal cortex, small intestine and stomach. Detected in fetal liver and kidney. Expressed in neural progenitor cells.

The protein localises to the cell membrane. In terms of biological role, receptor for WNT2 that is coupled to the beta-catenin canonical signaling pathway, which leads to the activation of disheveled proteins, inhibition of GSK-3 kinase, nuclear accumulation of beta-catenin and activation of Wnt target genes. Plays a role in neuromuscular junction (NMJ) assembly by negatively regulating the clustering of acetylcholine receptors (AChR) through the beta-catenin canonical signaling pathway. May play a role in neural progenitor cells (NPCs) viability through the beta-catenin canonical signaling pathway by negatively regulating cell cycle arrest leading to inhibition of neuron apoptotic process. During hippocampal development, regulates neuroblast proliferation and apoptotic cell death. Controls bone formation through non canonical Wnt signaling mediated via ISG15. Positively regulates bone regeneration through non canonical Wnt signaling. The chain is Frizzled-9 (FZD9) from Homo sapiens (Human).